We begin with the raw amino-acid sequence, 279 residues long: Reaction center protein L chain (279 aa).

The next 3 helical transmembrane spans lie at 33–56 (GFFG…GASQ), 85–113 (GLWQ…RKLG), and 116–141 (YHVP…ILMG). Histidine 154 and histidine 174 together coordinate (7R,8Z)-bacteriochlorophyll b. The helical transmembrane segment at 171-200 (NPAHMLAITFFFTTTLAMSMHGGLILSAAN) threads the bilayer. Histidine 191 provides a ligand contact to Fe cation. Phenylalanine 217 serves as a coordination point for a ubiquinone. The helical transmembrane segment at 226 to 252 (GSLGIHRLGLFLALSAAFWSAVCIVIS) threads the bilayer. Histidine 231 provides a ligand contact to Fe cation.

It belongs to the reaction center PufL/M/PsbA/D family. As to quaternary structure, reaction center is composed of four bacteriochlorophylls, two bacteriopheophytins, two ubiquinones, one iron, and three highly hydrophobic polypeptide chains (designated L, M, and H).

It is found in the cell inner membrane. The reaction center is a membrane-bound complex that mediates the initial photochemical event in the electron transfer process of photosynthesis. The chain is Reaction center protein L chain (pufL) from Rubrivivax gelatinosus (Rhodocyclus gelatinosus).